The chain runs to 301 residues: Protoheme IX farnesyltransferase (301 aa).

8 helical membrane-spanning segments follow: residues 30-50 (VISL…PKAI), 55-75 (IIVS…GGMI), 106-126 (AYAI…LANP), 127-147 (LTAL…SIWL), 152-172 (WWNI…GFAA), 177-197 (FTLL…GHFW), 233-253 (ALMV…YLIV), and 281-301 (FKLS…VKLI).

It belongs to the UbiA prenyltransferase family. Protoheme IX farnesyltransferase subfamily.

It localises to the cell membrane. It carries out the reaction heme b + (2E,6E)-farnesyl diphosphate + H2O = Fe(II)-heme o + diphosphate. The protein operates within porphyrin-containing compound metabolism; heme O biosynthesis; heme O from protoheme: step 1/1. Converts heme B (protoheme IX) to heme O by substitution of the vinyl group on carbon 2 of heme B porphyrin ring with a hydroxyethyl farnesyl side group. This Sulfurisphaera tokodaii (strain DSM 16993 / JCM 10545 / NBRC 100140 / 7) (Sulfolobus tokodaii) protein is Protoheme IX farnesyltransferase.